The following is a 205-amino-acid chain: Dephospho-CoA kinase (205 aa).

In terms of domain architecture, DPCK spans 5–201 (VVGLTGGIGS…QRYLQLSGNH (197 aa)). 13–18 (GSGKTT) contacts ATP.

The protein belongs to the CoaE family.

It is found in the cytoplasm. The enzyme catalyses 3'-dephospho-CoA + ATP = ADP + CoA + H(+). It participates in cofactor biosynthesis; coenzyme A biosynthesis; CoA from (R)-pantothenate: step 5/5. Its function is as follows. Catalyzes the phosphorylation of the 3'-hydroxyl group of dephosphocoenzyme A to form coenzyme A. This chain is Dephospho-CoA kinase, found in Shewanella oneidensis (strain ATCC 700550 / JCM 31522 / CIP 106686 / LMG 19005 / NCIMB 14063 / MR-1).